The following is a 177-amino-acid chain: Cyclic pyranopterin monophosphate synthase 3 (177 aa).

Residues 79-81 and 116-117 each bind substrate; these read LCH and ME. The active site involves Asp131. Residues 150-177 are disordered; the sequence is KSGGRSGHYRRHDADVKPSDGGSTEDGC.

The protein belongs to the MoaC family. As to quaternary structure, homohexamer; trimer of dimers.

It carries out the reaction (8S)-3',8-cyclo-7,8-dihydroguanosine 5'-triphosphate = cyclic pyranopterin phosphate + diphosphate. Its pathway is cofactor biosynthesis; molybdopterin biosynthesis. In terms of biological role, catalyzes the conversion of (8S)-3',8-cyclo-7,8-dihydroguanosine 5'-triphosphate to cyclic pyranopterin monophosphate (cPMP). This chain is Cyclic pyranopterin monophosphate synthase 3 (moaC3), found in Mycobacterium bovis (strain ATCC BAA-935 / AF2122/97).